The sequence spans 342 residues: N-acetyl-gamma-glutamyl-phosphate reductase (342 aa).

Residue Cys147 is part of the active site.

Belongs to the NAGSA dehydrogenase family. Type 1 subfamily.

It localises to the cytoplasm. The catalysed reaction is N-acetyl-L-glutamate 5-semialdehyde + phosphate + NADP(+) = N-acetyl-L-glutamyl 5-phosphate + NADPH + H(+). The protein operates within amino-acid biosynthesis; L-arginine biosynthesis; N(2)-acetyl-L-ornithine from L-glutamate: step 3/4. Catalyzes the NADPH-dependent reduction of N-acetyl-5-glutamyl phosphate to yield N-acetyl-L-glutamate 5-semialdehyde. In Campylobacter jejuni (strain RM1221), this protein is N-acetyl-gamma-glutamyl-phosphate reductase.